We begin with the raw amino-acid sequence, 401 residues long: F-box protein At2g43440 (401 aa).

Residues 7–53 enclose the F-box domain; it reads NTNSIYIVPELLEDIFLRLPLKSILKFKTVSRQWRSILESKLFVERR.

This Arabidopsis thaliana (Mouse-ear cress) protein is F-box protein At2g43440.